Reading from the N-terminus, the 376-residue chain is Alpha-2,8-sialyltransferase 8E (376 aa).

The Cytoplasmic portion of the chain corresponds to 1 to 17 (MRYADPSANRDLLGNRT). Residues 18 to 38 (LLFIFICAFALVTLLQQILYG) traverse the membrane as a helical; Signal-anchor for type II membrane protein segment. The Lumenal portion of the chain corresponds to 39–376 (RNYIKRYFEF…RVHTGTCSCC (338 aa)). N-linked (GlcNAc...) asparagine glycans are attached at residues Asn56 and Asn96. 2 disulfides stabilise this stretch: Cys164-Cys313 and Cys178-Cys373. Residues Asn192 and 214 to 216 (NPS) contribute to the substrate site. N-linked (GlcNAc...) asparagine glycans are attached at residues Asn241 and Asn284. 300–302 (STG) is a substrate binding site. The Proton donor/acceptor role is filled by His348.

This sequence belongs to the glycosyltransferase 29 family.

Its subcellular location is the golgi apparatus membrane. It catalyses the reaction a ganglioside GQ1c (d18:1(4E)) + CMP-N-acetyl-beta-neuraminate = a ganglioside GP1c (d18:1(4E)) + CMP + H(+). Its pathway is protein modification; protein glycosylation. Involved in the synthesis of gangliosides GD1c, GT1a, GQ1b, GP1c and GT3 from GD1a, GT1b, GM1b and GD3 respectively. The polypeptide is Alpha-2,8-sialyltransferase 8E (ST8SIA5) (Pan troglodytes (Chimpanzee)).